The following is a 487-amino-acid chain: Iron-sulfur cluster assembly SufBD family protein ycf24 (487 aa).

Belongs to the iron-sulfur cluster assembly SufBD family.

It localises to the plastid. Its subcellular location is the chloroplast. This is Iron-sulfur cluster assembly SufBD family protein ycf24 (ycf24) from Pyropia yezoensis (Susabi-nori).